The primary structure comprises 308 residues: Phenylcoumaran benzylic ether reductase TP7 (308 aa).

NADP(+)-binding positions include G11 to G17, R36, and K45. K133 acts as the Proton acceptor in catalysis. Residue R137 coordinates NADP(+).

It belongs to the NmrA-type oxidoreductase family. Isoflavone reductase subfamily. As to expression, expressed in flowers. Expressed at low levels in stems.

The enzyme catalyses (-)-dehydrodiconiferyl alcohol + NADPH + H(+) = (S)-isodihydrodehydrodiconiferyl alcohol + NADP(+). It carries out the reaction (+)-dehydrodiconiferyl alcohol + NADPH + H(+) = (R)-isodihydrodehydrodiconiferyl alcohol + NADP(+). The catalysed reaction is (2R,3S)-dihydrodehydrodiconiferyl alcohol + NADPH + H(+) = (S)-tetrahydrodehydrodiconiferyl alcohol + NADP(+). It catalyses the reaction (2S,3R)-dihydrodehydrodiconiferyl alcohol + NADPH + H(+) = (R)-tetrahydrodehydrodiconiferyl alcohol + NADP(+). Functionally, oxidoreductase involved in lignan biosynthesis. Catalyzes the NADPH-dependent reduction of phenylcoumaran benzylic ethers. Converts dehydrodiconiferyl alcohol (DDC) to isodihydrodehydrodiconiferyl alcohol (IDDDC), and dihydrodehydrodiconiferyl alcohol (DDDC) to tetrahydrodehydrodiconiferyl alcohol (TDDC). The chain is Phenylcoumaran benzylic ether reductase TP7 from Nicotiana tabacum (Common tobacco).